The sequence spans 171 residues: Putative defense protein (171 aa).

The signal sequence occupies residues 1–23 (MKVYACLCAAVVMLVMTSRVSEA). In terms of domain architecture, Reelin spans 24–171 (RSTGAPLSAC…VQSAPIKIVS (148 aa)). Cysteine 33 and cysteine 110 are disulfide-bonded. Residue asparagine 41 is glycosylated (N-linked (GlcNAc...) asparagine).

The protein belongs to the insect defense protein family.

It localises to the secreted. Its function is as follows. May have antimicrobial activity. The sequence is that of Putative defense protein from Bombyx mori (Silk moth).